A 392-amino-acid chain; its full sequence is Stilbene synthase 1 (392 aa).

Lys-55–Arg-58 contacts substrate. Cys-164 is an active-site residue. Substrate contacts are provided by residues Leu-267 and Gly-305–Pro-307.

It belongs to the thiolase-like superfamily. Chalcone/stilbene synthases family. As to quaternary structure, homodimer. In terms of tissue distribution, in leaves, expressed in palisade and spongy parenchyma cells and, to a lesser extent, in epidermal cells after induction.

It is found in the cytoplasm. The catalysed reaction is 4-coumaroyl-CoA + 3 malonyl-CoA + 3 H(+) = trans-resveratrol + 4 CO2 + 4 CoA. Its pathway is phytoalexin biosynthesis; 3,4',5-trihydroxystilbene biosynthesis; 3,4',5-trihydroxystilbene from trans-4-coumarate: step 2/2. Functionally, mediates resistance to pathogens which are sensitive to stilbenes such as Botrytis cinerea, Eutypa lata and Plasmopora viticola by enhancing the production of phytoalexins. Confers resistance to Phytophthora palmivora when expressed in papaya. The sequence is that of Stilbene synthase 1 (VINST1) from Vitis vinifera (Grape).